The chain runs to 275 residues: Formamidopyrimidine-DNA glycosylase (275 aa).

Pro2 (schiff-base intermediate with DNA) is an active-site residue. Glu3 functions as the Proton donor in the catalytic mechanism. Lys58 serves as the catalytic Proton donor; for beta-elimination activity. His91, Arg109, and Lys154 together coordinate DNA. Residues 240–274 (AVYERAGLACRVCGTPIRRLVQGQRATYFCPHCQK) form an FPG-type zinc finger. Arg264 acts as the Proton donor; for delta-elimination activity in catalysis.

It belongs to the FPG family. Monomer. Zn(2+) serves as cofactor.

It carries out the reaction Hydrolysis of DNA containing ring-opened 7-methylguanine residues, releasing 2,6-diamino-4-hydroxy-5-(N-methyl)formamidopyrimidine.. It catalyses the reaction 2'-deoxyribonucleotide-(2'-deoxyribose 5'-phosphate)-2'-deoxyribonucleotide-DNA = a 3'-end 2'-deoxyribonucleotide-(2,3-dehydro-2,3-deoxyribose 5'-phosphate)-DNA + a 5'-end 5'-phospho-2'-deoxyribonucleoside-DNA + H(+). Functionally, involved in base excision repair of DNA damaged by oxidation or by mutagenic agents. Acts as a DNA glycosylase that recognizes and removes damaged bases. Has a preference for oxidized purines, such as 7,8-dihydro-8-oxoguanine (8-oxoG). Has AP (apurinic/apyrimidinic) lyase activity and introduces nicks in the DNA strand. Cleaves the DNA backbone by beta-delta elimination to generate a single-strand break at the site of the removed base with both 3'- and 5'-phosphates. In Bordetella avium (strain 197N), this protein is Formamidopyrimidine-DNA glycosylase.